The sequence spans 197 residues: Inosine triphosphate pyrophosphatase (197 aa).

10–15 provides a ligand contact to ITP; it reads TGNANK. Residue Glu-45 participates in Mg(2+) binding. Residues Lys-58, 76–77, Lys-93, 151–154, Lys-175, and 180–181 contribute to the ITP site; these read DT, FGWD, and HR.

This sequence belongs to the HAM1 NTPase family. Homodimer. The cofactor is Mg(2+). Requires Mn(2+) as cofactor.

The protein resides in the cytoplasm. The protein localises to the nucleus. The catalysed reaction is ITP + H2O = IMP + diphosphate + H(+). It carries out the reaction dITP + H2O = dIMP + diphosphate + H(+). The enzyme catalyses XTP + H2O = XMP + diphosphate + H(+). It catalyses the reaction N(6)-hydroxy-dATP + H2O = N(6)-hydroxy-dAMP + diphosphate + H(+). Its function is as follows. Pyrophosphatase that hydrolyzes the non-canonical purine nucleotides inosine triphosphate (ITP), deoxyinosine triphosphate (dITP) as well as 2'-deoxy-N-6-hydroxylaminopurine triphosphate (dHAPTP) and 5-bromodeoxyuridine 5'-triphosphate (BrdUTP) to their respective monophosphate derivatives. Xanthosine 5'-triphosphate (XTP) is also a potential substrate. The enzyme does not distinguish between the deoxy- and ribose forms. Probably excludes non-canonical purines from RNA and DNA precursor pools, thus preventing their incorporation into RNA and DNA and avoiding chromosomal lesions. This chain is Inosine triphosphate pyrophosphatase, found in Saccharomyces cerevisiae (strain ATCC 204508 / S288c) (Baker's yeast).